The following is a 101-amino-acid chain: Protein S100-A11 (101 aa).

EF-hand domains follow at residues 13–48 (IESL…ELAS) and 54–89 (KDPA…IAVA). Ca(2+) contacts are provided by Asn30, Lys32, Glu37, Asp67, Asn69, Asp71, Gln73, and Glu78.

The protein belongs to the S-100 family. Homodimer; disulfide-linked. Smooth muscle and non-muscle tissues.

The chain is Protein S100-A11 (S100A11) from Gallus gallus (Chicken).